A 210-amino-acid chain; its full sequence is Noranthrone monooxygenase (210 aa).

The next 4 membrane-spanning stretches (helical) occupy residues 59–79, 105–125, 131–151, and 188–208; these read TGSF…PILI, GIAL…YSVG, WMVA…FMNA, and VRAL…CGVV.

This sequence belongs to the anthrone oxygenase family.

The protein resides in the membrane. It carries out the reaction noranthrone + O2 = norsolorinic acid + H2O. The protein operates within mycotoxin biosynthesis; aflatoxin biosynthesis. Monooxygenase that converts norsolorinic acid anthrone to norsolorinic acid during aflatoxin biosynthesis. The protein is Noranthrone monooxygenase (hypC) of Aspergillus flavus (strain ATCC 200026 / FGSC A1120 / IAM 13836 / NRRL 3357 / JCM 12722 / SRRC 167).